The following is a 325-amino-acid chain: MAQMTMVQAINDALKSELKRDEDVLVFGEDVGVNGGVFRVTEGLQKEFGEDRVFDTPLAESGIGGLALGLAVTGFRPVMEIQFLGFVYEVFDEVAGQIARTRFRSGGTKPAPVTIRTPFGGGVHTPELHADNLEGILAQSPGLKVVIPSGPYDAKGLLISSIQSNDPVVYLEHMKLYRSFREEVPEEEYKIDIGKANVKKEGNDITLISYGAMVQESLKAAEELEKDGYSVEVIDLRTVQPIDIDTLVASVEKTGRAVVVQEAQRQAGVGAQVAAELAERAILSLEAPIARVAASDTIYPFTQAENVWLPNKKDIIEQAKATLEF.

Position 60 (Glu60) interacts with thiamine diphosphate.

Heterodimer of an alpha and a beta chain. It depends on thiamine diphosphate as a cofactor.

It carries out the reaction N(6)-[(R)-lipoyl]-L-lysyl-[protein] + pyruvate + H(+) = N(6)-[(R)-S(8)-acetyldihydrolipoyl]-L-lysyl-[protein] + CO2. Its function is as follows. The pyruvate dehydrogenase complex catalyzes the overall conversion of pyruvate to acetyl-CoA and CO(2). It contains multiple copies of three enzymatic components: pyruvate dehydrogenase (E1), dihydrolipoamide acetyltransferase (E2) and lipoamide dehydrogenase (E3). This Staphylococcus epidermidis (strain ATCC 35984 / DSM 28319 / BCRC 17069 / CCUG 31568 / BM 3577 / RP62A) protein is Pyruvate dehydrogenase E1 component subunit beta (pdhB).